Here is a 188-residue protein sequence, read N- to C-terminus: MALVENLQQAVDALRKGCVIAYPTEGVFGLGCDPDNQTAMLRLLAIKQRPVEKGVILIAASYAQLRPYVDETQLTAEQLTQVLASWPAPLTWVMPASGDTPSWVRGQFDTVAVRVSDHPVVQKLCLAFGKPLTSTSANLSGQPACVTQQEVMVQLGNQIAVVVEGKTSGRHGPSEIRDARSLQVLRQG.

Positions 4-188 (VENLQQAVDA…ARSLQVLRQG (185 aa)) constitute a YrdC-like domain.

The protein belongs to the SUA5 family. TsaC subfamily.

The protein localises to the cytoplasm. It catalyses the reaction L-threonine + hydrogencarbonate + ATP = L-threonylcarbamoyladenylate + diphosphate + H2O. Required for the formation of a threonylcarbamoyl group on adenosine at position 37 (t(6)A37) in tRNAs that read codons beginning with adenine. Catalyzes the conversion of L-threonine, HCO(3)(-)/CO(2) and ATP to give threonylcarbamoyl-AMP (TC-AMP) as the acyladenylate intermediate, with the release of diphosphate. In Vibrio cholerae serotype O1 (strain ATCC 39541 / Classical Ogawa 395 / O395), this protein is Threonylcarbamoyl-AMP synthase.